The following is a 655-amino-acid chain: Tumor necrosis factor receptor superfamily member 21 (655 aa).

An N-terminal signal peptide occupies residues 1-41; it reads MGTRASSITALASCSRTAGQVGATMVAGSLLLLGFLSTITA. Residues 42–349 are Extracellular-facing; the sequence is QPEQKTLSLP…AHKHFDINEH (308 aa). TNFR-Cys repeat units lie at residues 50-88, 90-131, 133-167, and 170-211; these read LPGT…LRVC, SCPA…DREC, CPPG…EDVR, and QCAR…DNVC. Cystine bridges form between cysteine 67–cysteine 80, cysteine 70–cysteine 88, cysteine 91–cysteine 106, cysteine 109–cysteine 123, cysteine 113–cysteine 131, cysteine 133–cysteine 144, cysteine 150–cysteine 168, cysteine 171–cysteine 186, and cysteine 192–cysteine 211. A glycan (N-linked (GlcNAc...) asparagine) is linked at asparagine 82. An N-linked (GlcNAc...) asparagine glycan is attached at asparagine 141. Disordered regions lie at residues 222-305 and 318-339; these read PPSS…QAPH and EATG…PRQN. Composition is skewed to polar residues over residues 241 to 262 and 276 to 302; these read VPSS…TASV and PDNT…THQQ. N-linked (GlcNAc...) asparagine glycosylation is found at asparagine 252, asparagine 257, asparagine 278, and asparagine 289. Residues 330 to 339 show a composition bias toward basic residues; sequence APKRGHPRQN. The chain crosses the membrane as a helical span at residues 350 to 370; sequence LPWMIVLFLLLVLVLIVVCSI. Cysteine 368 carries S-palmitoyl cysteine lipidation. Residues 371-655 lie on the Cytoplasmic side of the membrane; it reads RKSSRTLKKG…SVYSHLPDLL (285 aa). The Death domain maps to 415 to 498; it reads GIDILKLVAA…DVVEKIRGLM (84 aa).

In terms of assembly, associates with TRADD. Interacts with NGFR. Interacts with CASP8. Post-translationally, oxidized in response to reactive oxygen species (ROS), leading to endocytosis. Detected in spleen B-cells (at protein level). Ubiquitous. Highly expressed in adult spleen, thymus, testis, prostate, ovary, small intestine, colon, brain, lung and kidney, and in fetal brain, liver and lung. Detected at lower levels in adult peripheral blood leukocytes, lung, and in fetal muscle, heart, kidney, small intestine and skin. Detected in T-cells, B-cells and monocytes. In T-cells expression is highest in Th0 cells, intermediate in Th2 cells and lower in Th1 cells. Expressed at low levels in proliferating progenitors in the spinal cord, but is highly expressed by differentiating neurons within the spinal cord and adjacent dorsal root ganglia.

It localises to the cell membrane. Its function is as follows. Promotes apoptosis, possibly via a pathway that involves the activation of NF-kappa-B. Can also promote apoptosis mediated by BAX and by the release of cytochrome c from the mitochondria into the cytoplasm. Trophic-factor deprivation triggers the cleavage of surface APP by beta-secretase to release sAPP-beta which is further cleaved to release an N-terminal fragment of APP (N-APP). Negatively regulates oligodendrocyte survival, maturation and myelination. Plays a role in signaling cascades triggered by stimulation of T-cell receptors, in the adaptive immune response and in the regulation of T-cell differentiation and proliferation. Negatively regulates T-cell responses and the release of cytokines such as IL4, IL5, IL10, IL13 and IFNG by Th2 cells. Negatively regulates the production of IgG, IgM and IgM in response to antigens. May inhibit the activation of JNK in response to T-cell stimulation. Also acts as a regulator of pyroptosis: recruits CASP8 in response to reactive oxygen species (ROS) and subsequent oxidation, leading to activation of GSDMC. This Mus musculus (Mouse) protein is Tumor necrosis factor receptor superfamily member 21 (Tnfrsf21).